The primary structure comprises 555 residues: Glycerol dehydratase large subunit (555 aa).

This sequence belongs to the diol/glycerol dehydratase large subunit family. Probably consists of three subunits: large, medium, and small. Adenosylcob(III)alamin is required as a cofactor.

It carries out the reaction glycerol = 3-hydroxypropanal + H2O. In Citrobacter freundii, this protein is Glycerol dehydratase large subunit (dhaB).